The sequence spans 1447 residues: Sister chromatid cohesion protein PDS5 homolog B (1447 aa).

Residues 383–419 form an HEAT repeat; that stretch reads LLVNDHLLNFVRERTLDKRWRVRKEAMMGLAQIYKKY. Positions 1117–1447 are disordered; sequence KSFFTPGKPK…RRRSAKRERR (331 aa). Lys1136 carries the post-translational modification N6-acetyllysine. Residues 1137–1155 show a composition bias toward polar residues; the sequence is PLSSAGKQSQTKSSRMETV. 6 positions are modified to phosphoserine: Ser1140, Ser1162, Ser1166, Ser1176, Ser1182, and Ser1191. Positions 1156–1167 are enriched in low complexity; the sequence is SNASSSSNPSSP. Positions 1172–1184 are enriched in basic and acidic residues; that stretch reads GRLDSSEMDHSEN. Basic and acidic residues-rich tracts occupy residues 1196–1214 and 1225–1243; these read KKSDKRDDSDLVRSELEKP and QEEKLGMDDLTKLVQEQKP. Residues 1245–1254 are compositionally biased toward basic residues; the sequence is GSQRSRKRGH. Residues 1249–1261 constitute a DNA-binding region (a.T hook 1); sequence SRKRGHTASESDE. Thr1255 is subject to Phosphothreonine. Phosphoserine is present on residues Ser1257 and Ser1259. Over residues 1265 to 1274 the composition is skewed to basic and acidic residues; sequence PEEKRLKEDI. Ser1283 is subject to Phosphoserine. Residues 1287–1299 constitute a DNA-binding region (a.T hook 2); the sequence is KGKRGRPPKPLGG. The span at 1310–1319 shows a compositional bias: basic residues; it reads TSKKGSKKKS. Phosphoserine is present on residues Ser1319 and Ser1334. The segment covering 1342 to 1353 has biased composition (basic residues); it reads KSKQHRVSRRAQ. The segment covering 1355–1372 has biased composition (polar residues); that stretch reads RAESPESSAIESTQSTPQ. Phosphoserine is present on residues Ser1358 and Ser1366. Thr1367 bears the Phosphothreonine mark. Ser1369 is modified (phosphoserine). Thr1370 and Thr1381 each carry phosphothreonine. The a.T hook 3 DNA-binding region spans 1372–1384; it reads QKGRGRPSKTPSP. The span at 1379-1388 shows a compositional bias: low complexity; it reads SKTPSPSQPK. Ser1383 and Ser1417 each carry phosphoserine. A compositionally biased stretch (acidic residues) spans 1422–1432; that stretch reads IPQEETEEEEV. The segment covering 1437 to 1447 has biased composition (basic residues); sequence VRRRSAKRERR.

Belongs to the PDS5 family. Interacts with the cohesin complex. Interacts with RAD21; the interaction is direct. Interacts with WAPL (via FGF motifs) or CDCA5 (via the FGF motif); the interaction is direct, cohesin-dependent and competitive. As to expression, widely expressed.

The protein localises to the nucleus. Regulator of sister chromatid cohesion in mitosis which may stabilize cohesin complex association with chromatin. May couple sister chromatid cohesion during mitosis to DNA replication. Cohesion ensures that chromosome partitioning is accurate in both meiotic and mitotic cells and plays an important role in DNA repair. Plays a role in androgen-induced proliferative arrest in prostate cells. This chain is Sister chromatid cohesion protein PDS5 homolog B (PDS5B), found in Homo sapiens (Human).